An 860-amino-acid chain; its full sequence is Protein argonaute-3 (860 aa).

The region spanning 230–349 (PVIQFMCEVL…LPLEVCNIVA (120 aa)) is the PAZ domain. The region spanning 518–819 (LIIVILPGKT…VAFRARYHLV (302 aa)) is the Piwi domain. Residues 530-567 (YAEVKRAGDTLLGMATQCVQVKNVIKTSPQTLSNLCLK) form an interaction with guide RNA region. The a divalent metal cation site is built by D598, E638, and D670. The segment at 758–805 (QGTSRPSHYHVLWDDNCFTADELQLLTYQLCHTYVRCTRSVSIPAPAY) is interaction with guide RNA. H808 lines the a divalent metal cation pocket.

It belongs to the argonaute family. Ago subfamily.

Its subcellular location is the cytoplasm. The protein resides in the P-body. It carries out the reaction Endonucleolytic cleavage to 5'-phosphomonoester.. Required for RNA-mediated gene silencing (RNAi). Binds to short RNAs such as microRNAs (miRNAs) and represses the translation of mRNAs which are complementary to them. Possesses RNA slicer activity but only on select RNAs bearing 5'- and 3'-flanking sequences to the region of guide-target complementarity. This chain is Protein argonaute-3 (AGO3), found in Gallus gallus (Chicken).